Reading from the N-terminus, the 65-residue chain is Beta-defensin 41 (65 aa).

Residues 1 to 19 form the signal peptide; that stretch reads MKFHLFFFILLFGATILTA. 3 cysteine pairs are disulfide-bonded: Cys-35/Cys-63, Cys-42/Cys-56, and Cys-46/Cys-64.

The protein belongs to the beta-defensin family. Isoform 2 is epididymis-specific and expressed mainly in the proximal caput.

The protein resides in the secreted. Has bactericidal activity. Its function is as follows. Isoform 2 may play a role in the antimicrobial protection of sperm and urogenital tract epithelia. This is Beta-defensin 41 from Mus musculus (Mouse).